The following is a 753-amino-acid chain: Translation initiation factor IF-2 (753 aa).

The tract at residues 1 to 166 (MSEKPRRDTG…PVMRPRGPVA (166 aa)) is disordered. Low complexity-rich tracts occupy residues 19-43 (STGQ…ATGA), 71-81 (NARPAAPANAR), and 102-122 (TPAP…TNTR). Positions 133–146 (PQPEEREREREAVL) are enriched in basic and acidic residues. Residues 153-162 (TTTRPVMRPR) show a composition bias toward low complexity. In terms of domain architecture, tr-type G spans 249-418 (PRPPVVTIMG…LLVADLEDLR (170 aa)). The tract at residues 258-265 (GHVDHGKT) is G1. 258–265 (GHVDHGKT) lines the GTP pocket. Residues 283–287 (GITQH) form a G2 region. Residues 304–307 (DTPG) are G3. Residues 304–308 (DTPGH) and 358–361 (NKID) contribute to the GTP site. A G4 region spans residues 358-361 (NKID). Positions 394-396 (SAR) are G5.

The protein belongs to the TRAFAC class translation factor GTPase superfamily. Classic translation factor GTPase family. IF-2 subfamily.

The protein localises to the cytoplasm. Its function is as follows. One of the essential components for the initiation of protein synthesis. Protects formylmethionyl-tRNA from spontaneous hydrolysis and promotes its binding to the 30S ribosomal subunits. Also involved in the hydrolysis of GTP during the formation of the 70S ribosomal complex. This chain is Translation initiation factor IF-2, found in Chloroflexus aggregans (strain MD-66 / DSM 9485).